Reading from the N-terminus, the 183-residue chain is Peptidyl-prolyl cis-trans isomerase H (183 aa).

The region spanning 19 to 182 (FFDVALGGEP…QDVVIIQCGE (164 aa)) is the PPIase cyclophilin-type domain.

Belongs to the cyclophilin-type PPIase family. PPIase H subfamily.

The protein localises to the nucleus. The enzyme catalyses [protein]-peptidylproline (omega=180) = [protein]-peptidylproline (omega=0). Its function is as follows. PPIases accelerate the folding of proteins. It catalyzes the cis-trans isomerization of proline imidic peptide bonds in oligopeptides. This is Peptidyl-prolyl cis-trans isomerase H (cyp3) from Emericella nidulans (strain FGSC A4 / ATCC 38163 / CBS 112.46 / NRRL 194 / M139) (Aspergillus nidulans).